The sequence spans 224 residues: UPF0758 protein VCM66_0205 (224 aa).

The tract at residues 1 to 20 is disordered; it reads MSLKQLPTESMPREKLLQRG. The 123-residue stretch at 102–224 folds into the MPN domain; sequence ALTSPQQTKL…VVSFAERGWI (123 aa). Zn(2+)-binding residues include His173, His175, and Asp186. A JAMM motif motif is present at residues 173–186; it reads HNHPSGVAEPSQAD.

It belongs to the UPF0758 family.

This is UPF0758 protein VCM66_0205 from Vibrio cholerae serotype O1 (strain M66-2).